The following is a 279-amino-acid chain: Succinate dehydrogenase [ubiquinone] iron-sulfur subunit 1, mitochondrial (279 aa).

The N-terminal 28 residues, 1–28 (MASGLIGRLVGTKPSKLATAARLIPARW), are a transit peptide targeting the mitochondrion. A 2Fe-2S ferredoxin-type domain is found at 52–141 (FQIYRWNPDN…ETTITPLPHM (90 aa)). [2Fe-2S] cluster is bound by residues cysteine 102, cysteine 107, and cysteine 122. Positions 184–214 (DRAKLDGMYECILCACCSTSCPSYWWNPESY) constitute a 4Fe-4S ferredoxin-type domain. [4Fe-4S] cluster contacts are provided by cysteine 194, cysteine 197, and cysteine 200. Cysteine 204 contributes to the [3Fe-4S] cluster binding site. Tryptophan 209 is a binding site for a ubiquinone. [3Fe-4S] cluster is bound by residues cysteine 251 and cysteine 257. Residue cysteine 261 coordinates [4Fe-4S] cluster.

Belongs to the succinate dehydrogenase/fumarate reductase iron-sulfur protein family. In terms of assembly, component of complex II composed of eight subunits in plants: four classical SDH subunits SDH1, SDH2, SDH3 and SDH4 (a flavoprotein (FP), an iron-sulfur protein (IP), and a cytochrome b composed of a large and a small subunit.), as well as four subunits unknown in mitochondria from bacteria and heterotrophic eukaryotes. It depends on [2Fe-2S] cluster as a cofactor. Requires [3Fe-4S] cluster as cofactor. [4Fe-4S] cluster is required as a cofactor. As to expression, ubiquitous. Preferentially expressed in flowers and inflorescences.

The protein localises to the mitochondrion inner membrane. The enzyme catalyses a quinone + succinate = fumarate + a quinol. Its pathway is carbohydrate metabolism; tricarboxylic acid cycle; fumarate from succinate (eukaryal route): step 1/1. In terms of biological role, iron-sulfur protein (IP) subunit of succinate dehydrogenase (SDH) that is involved in complex II of the mitochondrial electron transport chain and is responsible for transferring electrons from succinate to ubiquinone (coenzyme Q). This is Succinate dehydrogenase [ubiquinone] iron-sulfur subunit 1, mitochondrial (SDH2-1) from Arabidopsis thaliana (Mouse-ear cress).